A 362-amino-acid polypeptide reads, in one-letter code: Patr class I histocompatibility antigen, A-5 alpha chain (362 aa).

The N-terminal stretch at 1-24 (MQVTAPRTVLLLLSAALALTETWA) is a signal peptide. An alpha-1 region spans residues 25–114 (GSHSMKYFYT…LRGYYNQSEA (90 aa)). Residues 25-308 (GSHSMKYFYT…EPSSQSTIPI (284 aa)) lie on the Extracellular side of the membrane. Residue Asn110 is glycosylated (N-linked (GlcNAc...) asparagine). An alpha-2 region spans residues 115-206 (GSHIIQRMYG…ENGKETLQRA (92 aa)). 2 disulfide bridges follow: Cys125/Cys188 and Cys227/Cys283. The alpha-3 stretch occupies residues 207-298 (DPPKTHVTHH…GLPKPLTLRW (92 aa)). The Ig-like C1-type domain maps to 209-295 (PKTHVTHHPI…QHEGLPKPLT (87 aa)). A connecting peptide region spans residues 299–308 (EPSSQSTIPI). A helical membrane pass occupies residues 309 to 332 (VGIVAGLAVLAVVVIGAVVAAVMC). The Cytoplasmic portion of the chain corresponds to 333 to 362 (RRKSSGGKGGSYSQAASSDSAQGSDVSLTA). Residues 336–362 (SSGGKGGSYSQAASSDSAQGSDVSLTA) are disordered. Residue Ser343 is modified to Phosphoserine. The segment covering 343–362 (SYSQAASSDSAQGSDVSLTA) has biased composition (low complexity). Tyr344 is modified (phosphotyrosine). A phosphoserine mark is found at Ser345, Ser349, Ser350, Ser352, Ser356, and Ser359.

The protein belongs to the MHC class I family. As to quaternary structure, heterodimer of an alpha chain and a beta chain (beta-2-microglobulin).

It is found in the membrane. Its function is as follows. Involved in the presentation of foreign antigens to the immune system. The polypeptide is Patr class I histocompatibility antigen, A-5 alpha chain (Pan troglodytes (Chimpanzee)).